The primary structure comprises 495 residues: Glycogen synthase (495 aa).

K24 contacts ADP-alpha-D-glucose.

This sequence belongs to the glycosyltransferase 1 family. Bacterial/plant glycogen synthase subfamily.

The enzyme catalyses [(1-&gt;4)-alpha-D-glucosyl](n) + ADP-alpha-D-glucose = [(1-&gt;4)-alpha-D-glucosyl](n+1) + ADP + H(+). Its pathway is glycan biosynthesis; glycogen biosynthesis. Its function is as follows. Synthesizes alpha-1,4-glucan chains using ADP-glucose. This chain is Glycogen synthase, found in Nitrosomonas europaea (strain ATCC 19718 / CIP 103999 / KCTC 2705 / NBRC 14298).